The sequence spans 298 residues: N-acetylmuramic acid 6-phosphate etherase 2 (298 aa).

The SIS domain occupies 51 to 214; the sequence is IVSRFEQGGR…STAAMVRLGR (164 aa). Glu-79 serves as the catalytic Proton donor. The active site involves Glu-110.

This sequence belongs to the GCKR-like family. MurNAc-6-P etherase subfamily. In terms of assembly, homodimer.

It carries out the reaction N-acetyl-D-muramate 6-phosphate + H2O = N-acetyl-D-glucosamine 6-phosphate + (R)-lactate. Its pathway is amino-sugar metabolism; N-acetylmuramate degradation. Its function is as follows. Specifically catalyzes the cleavage of the D-lactyl ether substituent of MurNAc 6-phosphate, producing GlcNAc 6-phosphate and D-lactate. This is N-acetylmuramic acid 6-phosphate etherase 2 from Bacillus licheniformis (strain ATCC 14580 / DSM 13 / JCM 2505 / CCUG 7422 / NBRC 12200 / NCIMB 9375 / NCTC 10341 / NRRL NRS-1264 / Gibson 46).